The chain runs to 166 residues: Small ribosomal subunit protein uS5 (166 aa).

The 64-residue stretch at L11–I74 folds into the S5 DRBM domain.

This sequence belongs to the universal ribosomal protein uS5 family. Part of the 30S ribosomal subunit. Contacts proteins S4 and S8.

Functionally, with S4 and S12 plays an important role in translational accuracy. In terms of biological role, located at the back of the 30S subunit body where it stabilizes the conformation of the head with respect to the body. In Aliivibrio fischeri (strain ATCC 700601 / ES114) (Vibrio fischeri), this protein is Small ribosomal subunit protein uS5.